The primary structure comprises 223 residues: Coiled-coil domain-containing protein 124 (223 aa).

The tract at residues 1–126 is disordered; sequence MPKKFQGENT…AEKAKSHLEV (126 aa). Residues 15–82 adopt a coiled-coil conformation; it reads ARARRAEAKA…LLEEEDSKLK (68 aa). 2 stretches are compositionally biased toward basic and acidic residues: residues 18–74 and 99–126; these read RRAE…QRLL and QIED…HLEV. Residues Ser-141 and Ser-194 each carry the phosphoserine modification. The interval 204–223 is disordered; sequence WLRSPDNPMNQRAVPFNAPK.

It belongs to the CCDC124 family. As to quaternary structure, associates with translationally inactive ribosomes in the nonrotated state. Interacts with RASGEF1B. In terms of tissue distribution, ubiquitously expressed.

Its subcellular location is the cytoplasm. The protein localises to the cytoskeleton. The protein resides in the microtubule organizing center. It is found in the centrosome. It localises to the midbody. In terms of biological role, ribosome-binding protein involved in ribosome hibernation: associates with translationally inactive ribosomes and stabilizes the nonrotated conformation of the 80S ribosome, thereby promoting ribosome preservation and storage. Also required for proper progression of late cytokinetic stages. The protein is Coiled-coil domain-containing protein 124 of Homo sapiens (Human).